The sequence spans 209 residues: Peptidyl-tRNA hydrolase (209 aa).

Position 14 (Tyr-14) interacts with tRNA. His-19 acts as the Proton acceptor in catalysis. Residues Tyr-68, Asn-70, and Asn-116 each coordinate tRNA.

The protein belongs to the PTH family. Monomer.

The protein resides in the cytoplasm. It catalyses the reaction an N-acyl-L-alpha-aminoacyl-tRNA + H2O = an N-acyl-L-amino acid + a tRNA + H(+). Its function is as follows. Hydrolyzes ribosome-free peptidyl-tRNAs (with 1 or more amino acids incorporated), which drop off the ribosome during protein synthesis, or as a result of ribosome stalling. Functionally, catalyzes the release of premature peptidyl moieties from peptidyl-tRNA molecules trapped in stalled 50S ribosomal subunits, and thus maintains levels of free tRNAs and 50S ribosomes. In Phenylobacterium zucineum (strain HLK1), this protein is Peptidyl-tRNA hydrolase.